Consider the following 323-residue polypeptide: Beta-ketoacyl-[acyl-carrier-protein] synthase III (323 aa).

Residues C113 and H250 contribute to the active site. The segment at 251 to 255 is ACP-binding; sequence QANKR. N280 is an active-site residue.

This sequence belongs to the thiolase-like superfamily. FabH family. Homodimer.

Its subcellular location is the cytoplasm. The enzyme catalyses malonyl-[ACP] + acetyl-CoA + H(+) = 3-oxobutanoyl-[ACP] + CO2 + CoA. It functions in the pathway lipid metabolism; fatty acid biosynthesis. In terms of biological role, catalyzes the condensation reaction of fatty acid synthesis by the addition to an acyl acceptor of two carbons from malonyl-ACP. Catalyzes the first condensation reaction which initiates fatty acid synthesis and may therefore play a role in governing the total rate of fatty acid production. Possesses both acetoacetyl-ACP synthase and acetyl transacylase activities. Its substrate specificity determines the biosynthesis of branched-chain and/or straight-chain of fatty acids. This Brucella anthropi (strain ATCC 49188 / DSM 6882 / CCUG 24695 / JCM 21032 / LMG 3331 / NBRC 15819 / NCTC 12168 / Alc 37) (Ochrobactrum anthropi) protein is Beta-ketoacyl-[acyl-carrier-protein] synthase III.